The sequence spans 735 residues: Serine/threonine-protein kinase BRSK2 (735 aa).

In terms of domain architecture, Protein kinase spans 20 to 271 (YRLEKTLGKG…LEHIQKHIWY (252 aa)). ATP contacts are provided by residues 26 to 34 (LGKGQTGLV) and Lys-49. The active-site Proton acceptor is Asp-142. At Thr-175 the chain carries Phosphothreonine; by LKB1. Residue Thr-261 is modified to Phosphothreonine; by PKA. Residue Ser-295 is modified to Phosphoserine. Positions 298–340 (DIDPDVLDSMHSLGCFRDRNKLLQDLLSEEENQEKMIYFLLLD) constitute a UBA domain. The span at 346–367 (PSHEDEDLPPRNEIDPPRKRVD) shows a compositional bias: basic and acidic residues. Disordered regions lie at residues 346–476 (PSHE…GVPW), 493–514 (FHRR…PESS), and 682–735 (KNGQ…REQP). Phosphoserine occurs at positions 368, 383, 394, 413, 417, 424, and 428. The span at 411–429 (SRSISGASSGLSTSPLSSP) shows a compositional bias: low complexity. The span at 432–446 (TPHPSPRGSPLPTPK) shows a compositional bias: pro residues. A Phosphoserine modification is found at Ser-456. Residues Thr-460, Thr-464, and Thr-510 each carry the phosphothreonine modification. A phosphoserine mark is found at Ser-513 and Ser-514.

The protein belongs to the protein kinase superfamily. CAMK Ser/Thr protein kinase family. SNF1 subfamily. In terms of assembly, interacts with FZR1, a regulatory subunit of the APC ubiquitin ligase complex. Interacts with COPS5. Interacts with PAK1. Requires Mg(2+) as cofactor. Post-translationally, may be phosphorylated at Thr-261 by PKA. Phosphorylated at Thr-175 by STK11/LKB1 in complex with STE20-related adapter-alpha (STRADA) pseudo kinase and CAB39. Not phosphorylated at Thr-175 by CaMKK2. In contrast, it is phosphorylated and activated by CaMKK1. May be inactivated via dephosphorylation of Thr-175 by PP2C. In terms of processing, polyubiquitinated by the APC complex in conjunction with FZR1, leading to its proteasomal degradation. Targeted for proteasomal degradation by interaction with COPS5. BRSK2 levels change during the cell cycle. BRSK2 levels are low at the G1/S boundary and gradually increase as cells progress into G2 phase. BRSK2 levels decrease rapidly at the end of mitosis.

The protein localises to the cytoplasm. It localises to the cytoskeleton. The protein resides in the microtubule organizing center. It is found in the centrosome. Its subcellular location is the perinuclear region. The protein localises to the endoplasmic reticulum. It catalyses the reaction L-seryl-[protein] + ATP = O-phospho-L-seryl-[protein] + ADP + H(+). The catalysed reaction is L-threonyl-[protein] + ATP = O-phospho-L-threonyl-[protein] + ADP + H(+). It carries out the reaction L-seryl-[tau protein] + ATP = O-phospho-L-seryl-[tau protein] + ADP + H(+). The enzyme catalyses L-threonyl-[tau protein] + ATP = O-phospho-L-threonyl-[tau protein] + ADP + H(+). With respect to regulation, activated by phosphorylation on Thr-175 by STK11/LKB1. Its function is as follows. Serine/threonine-protein kinase that plays a key role in polarization of neurons and axonogenesis, cell cycle progress and insulin secretion. Phosphorylates CDK16, CDC25C, MAPT/TAU, PAK1 and WEE1. Following phosphorylation and activation by STK11/LKB1, acts as a key regulator of polarization of cortical neurons, probably by mediating phosphorylation of microtubule-associated proteins such as MAPT/TAU at 'Thr-523' and 'Ser-573'. Also regulates neuron polarization by mediating phosphorylation of WEE1 at 'Ser-642' in post-mitotic neurons, leading to down-regulate WEE1 activity in polarized neurons. Plays a role in the regulation of the mitotic cell cycle progress and the onset of mitosis. Plays a role in the regulation of insulin secretion in response to elevated glucose levels, probably via phosphorylation of CDK16 and PAK1. While BRSK2 phosphorylated at Thr-175 can inhibit insulin secretion, BRSK2 phosphorylated at Thr-261 can promote insulin secretion. Regulates reorganization of the actin cytoskeleton. May play a role in the apoptotic response triggered by endoplasmic reticulum (ER) stress. The chain is Serine/threonine-protein kinase BRSK2 (Brsk2) from Rattus norvegicus (Rat).